We begin with the raw amino-acid sequence, 665 residues long: RNA-directed RNA polymerase (665 aa).

It carries out the reaction RNA(n) + a ribonucleoside 5'-triphosphate = RNA(n+1) + diphosphate. In terms of biological role, RNA-dependent RNA polymerase which replicates the viral genome. This is RNA-directed RNA polymerase from Atkinsonella hypoxylon (AhV).